Consider the following 204-residue polypeptide: UPF0637 protein lin1053 (204 aa).

The protein belongs to the UPF0637 family.

This Listeria innocua serovar 6a (strain ATCC BAA-680 / CLIP 11262) protein is UPF0637 protein lin1053.